A 128-amino-acid polypeptide reads, in one-letter code: Large ribosomal subunit protein uL22 (128 aa).

Belongs to the universal ribosomal protein uL22 family. As to quaternary structure, part of the 50S ribosomal subunit.

Its function is as follows. This protein binds specifically to 23S rRNA; its binding is stimulated by other ribosomal proteins, e.g. L4, L17, and L20. It is important during the early stages of 50S assembly. It makes multiple contacts with different domains of the 23S rRNA in the assembled 50S subunit and ribosome. Functionally, the globular domain of the protein is located near the polypeptide exit tunnel on the outside of the subunit, while an extended beta-hairpin is found that lines the wall of the exit tunnel in the center of the 70S ribosome. In Prochlorococcus marinus (strain MIT 9301), this protein is Large ribosomal subunit protein uL22.